An 82-amino-acid chain; its full sequence is uncharacterized protein (82 aa).

This is an uncharacterized protein from Pigeon circovirus (PiCV).